Consider the following 201-residue polypeptide: Small ribosomal subunit protein uS4 (201 aa).

The S4 RNA-binding domain occupies serine 91 to glutamate 151.

Belongs to the universal ribosomal protein uS4 family. Part of the 30S ribosomal subunit. Contacts protein S5. The interaction surface between S4 and S5 is involved in control of translational fidelity.

Its function is as follows. One of the primary rRNA binding proteins, it binds directly to 16S rRNA where it nucleates assembly of the body of the 30S subunit. In terms of biological role, with S5 and S12 plays an important role in translational accuracy. This is Small ribosomal subunit protein uS4 from Corynebacterium glutamicum (strain R).